The sequence spans 125 residues: Small ribosomal subunit protein uS13 (125 aa).

Positions G95–K125 are disordered.

It belongs to the universal ribosomal protein uS13 family. As to quaternary structure, part of the 30S ribosomal subunit. Forms a loose heterodimer with protein S19. Forms two bridges to the 50S subunit in the 70S ribosome.

Its function is as follows. Located at the top of the head of the 30S subunit, it contacts several helices of the 16S rRNA. In the 70S ribosome it contacts the 23S rRNA (bridge B1a) and protein L5 of the 50S subunit (bridge B1b), connecting the 2 subunits; these bridges are implicated in subunit movement. Contacts the tRNAs in the A and P-sites. This chain is Small ribosomal subunit protein uS13, found in Cytophaga hutchinsonii (strain ATCC 33406 / DSM 1761 / CIP 103989 / NBRC 15051 / NCIMB 9469 / D465).